The following is a 423-amino-acid chain: tRNA(Ile2) 2-agmatinylcytidine synthetase TiaS (423 aa).

Positions 273–347 (VIVYGRVVEE…GINIEKIKIL (75 aa)) form a DNA-binding region, OB.

It belongs to the TiaS family.

The protein localises to the cytoplasm. It carries out the reaction cytidine(34) in tRNA(Ile2) + agmatine + ATP + H2O = 2-agmatinylcytidine(34) in tRNA(Ile2) + AMP + 2 phosphate + 2 H(+). Its function is as follows. ATP-dependent agmatine transferase that catalyzes the formation of 2-agmatinylcytidine (agm2C) at the wobble position (C34) of tRNA(Ile2), converting the codon specificity from AUG to AUA. The sequence is that of tRNA(Ile2) 2-agmatinylcytidine synthetase TiaS from Methanocaldococcus jannaschii (strain ATCC 43067 / DSM 2661 / JAL-1 / JCM 10045 / NBRC 100440) (Methanococcus jannaschii).